Consider the following 485-residue polypeptide: Glutamyl-tRNA(Gln) amidotransferase subunit A (485 aa).

Catalysis depends on charge relay system residues K79 and S154. The active-site Acyl-ester intermediate is S178.

The protein belongs to the amidase family. GatA subfamily. In terms of assembly, heterotrimer of A, B and C subunits.

The enzyme catalyses L-glutamyl-tRNA(Gln) + L-glutamine + ATP + H2O = L-glutaminyl-tRNA(Gln) + L-glutamate + ADP + phosphate + H(+). Its function is as follows. Allows the formation of correctly charged Gln-tRNA(Gln) through the transamidation of misacylated Glu-tRNA(Gln) in organisms which lack glutaminyl-tRNA synthetase. The reaction takes place in the presence of glutamine and ATP through an activated gamma-phospho-Glu-tRNA(Gln). This chain is Glutamyl-tRNA(Gln) amidotransferase subunit A, found in Clostridium botulinum (strain Langeland / NCTC 10281 / Type F).